The sequence spans 89 residues: MPAGSPENHVSAELLGILRDDLNVDVSRVTPDARLVDDVGLDSVAFAVGMVAIEERLGVTLTEEELLSCETVGDLQAAIAAEPRETRDE.

The region spanning 8–83 (NHVSAELLGI…DLQAAIAAEP (76 aa)) is the Carrier domain. At Ser-43 the chain carries O-(pantetheine 4'-phosphoryl)serine.

Post-translationally, 4'-phosphopantetheine is transferred from CoA to a specific serine of apo-ACP, leading to the activated holo-ACP form.

The protein resides in the cytoplasm. Its pathway is siderophore biosynthesis; mycobactin biosynthesis. Its function is as follows. Acyl carrier protein involved in the formation of acyl-S-ACP intermediates within the mycobactin biosynthesis process. The chain is Acyl carrier protein MbtL (mbtL) from Mycolicibacterium paratuberculosis (strain ATCC BAA-968 / K-10) (Mycobacterium paratuberculosis).